A 952-amino-acid chain; its full sequence is Microtubule-associated protein 6 (952 aa).

The segment at 1–15 (MAWPCITRACCIARF) is calmodulin-binding. S-palmitoyl cysteine attachment occurs at residues Cys-5, Cys-10, and Cys-11. Disordered regions lie at residues 37–457 (TEHP…RAVA) and 486–952 (IKPV…EGSP). Pro residues predominate over residues 41 to 55 (GAPPQPPAPPQPGLA). Ser-98 carries the phosphoserine modification. Residues 105-117 (ASGSTSGSGPADS) show a composition bias toward low complexity. The interval 116–139 (DSVMRQDYRAWKVQRPEPSCRPRS) is mn 1. The span at 119–139 (MRQDYRAWKVQRPEPSCRPRS) shows a compositional bias: basic and acidic residues. Residues 124-138 (RAWKVQRPEPSCRPR) form a calmodulin-binding region. Tyr-141 is modified (phosphotyrosine). The segment covering 147 to 171 (PFERETQYQKDFRAWPLPRRGDHPW) has biased composition (basic and acidic residues). The tract at residues 151 to 174 (ETQYQKDFRAWPLPRRGDHPWIPK) is mn 2. The calmodulin-binding stretch occupies residues 160-174 (AWPLPRRGDHPWIPK). Position 185 is a phosphoserine (Ser-185). The calmodulin-binding stretch occupies residues 187-201 (PVLGMPKRRPQSQER). Ser-207 is subject to Phosphoserine. Residues 221-230 (VPAAGKASGA) show a composition bias toward low complexity. Residues 222 to 267 (PAAGKASGADQRDTRRKAGPAWMVTRTEGHEEKPLPPAQSQTQEGG) form a Mc-1 repeat. The interval 222–451 (PAAGKASGAD…HAQGTGPEGG (230 aa)) is 5 X approximate tandem repeat Mc. Calmodulin-binding stretches follow at residues 235 to 249 (TRRK…TRTE), 280 to 294 (DTRR…VTRT), 325 to 339 (RDTR…MVTR), 373 to 387 (TRRK…TRTE), 421 to 435 (RKAG…SEGH), 481 to 495 (RAWT…IKAK), 532 to 546 (RRRI…FKES), and 559 to 573 (PKKT…RKAK). Residues 268-313 (PAAGKASGADQRDTRRKAGPAWMVTRTEGHEEKPLPPAQSQTQEGG) form a Mc-2 repeat. The Mc-3 repeat unit spans residues 314–359 (PAAGKASGADQRDTRRKAGPAWMVTRTEGHEETPLPPAQSQTQEGG). The Mc-4 repeat unit spans residues 360–405 (PAAGKASGADQRDTRRKAGPAWMVTRTEGHEETPLPPAQSQTQEGG). Residues 406-451 (PAAGKASGADERDTRRKAGPAWMVRRSEGHEQTTAAHAQGTGPEGG) form a Mc-5 repeat. Positions 473–496 (SSSYRNEFRAWTDIKPVKPIKAKP) are mn 3. The span at 542–551 (PFKESPKVEK) shows a compositional bias: basic and acidic residues. Residues 552-567 (PSVQSSKPKKTSTSQK) show a composition bias toward low complexity. A Phosphoserine modification is found at Ser-590. Residues 595-621 (KPDDKEQSKEMNNKLAEAKESRVKPTS) show a composition bias toward basic and acidic residues. At Ser-681 the chain carries Phosphoserine. A compositionally biased stretch (basic and acidic residues) spans 711 to 725 (KDQDHMASELLKNKD). Ser-736 is subject to Phosphoserine. Pro residues predominate over residues 761–775 (APAPTPLKDPGPVIP). Composition is skewed to basic and acidic residues over residues 776-792 (EPEK…RKDQ) and 821-831 (PAKDTGTDLKG). The segment covering 903–915 (VPAPTKDPGPTAP) has biased composition (pro residues). Phosphoserine is present on Ser-951.

It belongs to the STOP family. Interacts with calmodulin (via C-terminus); the interaction is dependent on Ca(2+). Interacts (via C-terminus) with TMEM106B (via N-terminus). Interacts with ZDHHC13 (via ANK repeats). Interacts with ZDHHC17 (via ANK repeats). In terms of processing, palmitoylated. Probably depalmitoylated by ABHD17A, ABHD17B and ABHD17C. During neuronal polarization, palmitoylation and depalmitoylation cycles regulate MAP6 shuttling between secretory vesicles and microtubules, and its polarized distribution in the axon. In terms of tissue distribution, isoform 1 is specifically expressed in adult brain. Isoform 2 is predominantly expressed in embryonic brain; expression persists at low levels in the adult brain.

Its subcellular location is the cytoplasm. It is found in the cytoskeleton. The protein resides in the golgi apparatus. It localises to the cell projection. The protein localises to the axon. Its subcellular location is the dendrite. It is found in the cytoplasmic vesicle. The protein resides in the secretory vesicle membrane. In terms of biological role, involved in microtubule stabilization in many cell types, including neuronal cells. Specifically has microtubule cold stabilizing activity. Involved in dendrite morphogenesis and maintenance by regulating lysosomal trafficking via its interaction with TMEM106B. Regulates KIF5A-mediated axonal cargo transport. Regulates axonal growth during neuron polarization. This chain is Microtubule-associated protein 6 (Map6), found in Rattus norvegicus (Rat).